The chain runs to 126 residues: MPKEYSRSQRVVEQIRRELAELIRLEVKDPRVGFITLTDVEISPDYAHAKVFFTSMTGEESVPEILQGLRRASGFLRRELGRRVRIHTTPELHFHYDRSVEEGSRLSRLIDDAVREDEIRHRDDDN.

The protein belongs to the RbfA family. In terms of assembly, monomer. Binds 30S ribosomal subunits, but not 50S ribosomal subunits or 70S ribosomes.

The protein resides in the cytoplasm. Functionally, one of several proteins that assist in the late maturation steps of the functional core of the 30S ribosomal subunit. Associates with free 30S ribosomal subunits (but not with 30S subunits that are part of 70S ribosomes or polysomes). Required for efficient processing of 16S rRNA. May interact with the 5'-terminal helix region of 16S rRNA. This Azoarcus sp. (strain BH72) protein is Ribosome-binding factor A.